A 427-amino-acid chain; its full sequence is Acyltransferase fer5 (427 aa).

The interval 1–24 is disordered; the sequence is MTAATSVQPSPAPRQPGLRATFNP. H342 provides a ligand contact to substrate. The active-site Proton acceptor is E380.

It belongs to the lysine N-acyltransferase mbtK family.

Its pathway is siderophore biosynthesis. Functionally, acyltransferase; part of the gene cluster that mediates the biosynthesis of siderophore ferrichrome A which is contributing to organismal virulence. The first step of ferrichrome A biosynthesis is performed by the HMG-CoA synthase hcs1 which catalyzes the generation of HMG-CoA and CoA using acetoacetyl-CoA and acetyl-CoA as substrates. The enoyl-CoA isomerase/hydratase fer4 then catalyzes the conversion of hcs1-produced HMG-CoA to methylglutaconyl-CoA. The acyltransferase fer5 then fuses the fer4-generated methylglutaconyl-CoA with sid1-generated hydroxyornithine to yield methylglutaconyl hydroxyornithine. Methylglutaconyl hydroxyornithine is then available for use by the NRPS fer3 to generate ferrichrome A. This chain is Acyltransferase fer5, found in Mycosarcoma maydis (Corn smut fungus).